We begin with the raw amino-acid sequence, 434 residues long: Flagellum-specific ATP synthase (434 aa).

An ATP-binding site is contributed by 164–171 (AGSGVGKS).

It belongs to the ATPase alpha/beta chains family.

Its subcellular location is the cytoplasm. The enzyme catalyses ATP + H2O + 4 H(+)(in) = ADP + phosphate + 5 H(+)(out). Functionally, probable catalytic subunit of a protein translocase for flagellum-specific export, or a proton translocase involved in local circuits at the flagellum. This Helicobacter pylori (strain J99 / ATCC 700824) (Campylobacter pylori J99) protein is Flagellum-specific ATP synthase (fliI).